Here is a 296-residue protein sequence, read N- to C-terminus: Short-chain dehydrogenase/reductase ascJ (296 aa).

The NADP(+) site is built by Ile-28, Asp-66, and Asn-93. The active-site Proton donor is Ser-155. Residues Tyr-168, Lys-172, and Thr-205 each contribute to the NADP(+) site. Tyr-168 (proton acceptor) is an active-site residue. Lys-172 acts as the Lowers pKa of active site Tyr in catalysis.

This sequence belongs to the short-chain dehydrogenases/reductases (SDR) family.

It catalyses the reaction ascofuranol + A = ascofuranone + AH2. It participates in secondary metabolite biosynthesis; terpenoid biosynthesis. Its function is as follows. Short-chain dehydrogenase/reductase; part of the asc-2 gene cluster that mediates the biosynthesis of ascofuranone, a strong inhibitor of cyanide-insensitive alternative oxidases and a promising drug candidate against African trypanosomiasis. The first step in the pathway is performed by the non-reducing polyketide synthase ascC that produces orsellinic acid by condensing acetyl-CoA with 3 malonyl-CoA units. Orsellinic acid is then prenylated by the prenyltransferase ascA to yield ilicicolinic acid B. Ilicicolinic acid B is further reduced to ilicicolin B by the reductase ascB. The halogenase ascD then chlorinates ilicicolin B to produce ilicicolin A which is converted to ilicicolin A epoxide by the cytochrome P450 monooxygenase ascE that catalyzes stereoselective epoxidation of the terminal double bond of the prenyl group. Ilicicolin A epoxide is the last common precursor for the biosynthesis of ascofuranone and ascochlorin. The terpene cyclase ascF produces a monocyclic terpene, and the cyclization reaction is proposed to be initiated by protonation of the terminal epoxide of ilicicolin A epoxide to generate a monocyclic tertiarycation, which is followed by a series of hydride and methyl shifts with abstraction of proton, leading to the formation of the (14S,15R,19R)-trimethylcyclohexanone ring structure of ilicicolin C, which is finally reduced to ascochlorin by the dehydrogenase ascG. On the other hand, ilicicolin A epoxide is hydroxylated by the cytochrome P450 monooxygenase ascH, and the resultant product is cyclized by the terpene cyclase ascI to ascofuranol via protonation-initiated epoxide ring opening, which facilitates the 6-endo-tet cyclization to form the tetrahy-drofuran ring. Finally, ascofuranol is oxidized into ascofuranone by ascJ. The protein is Short-chain dehydrogenase/reductase ascJ of Acremonium egyptiacum (Oospora egyptiaca).